The following is a 203-amino-acid chain: Ribosome maturation factor RimP (203 aa).

The segment at 184-203 is disordered; sequence RRGSAPVEDEEGEGEAPTAH.

This sequence belongs to the RimP family.

The protein localises to the cytoplasm. Required for maturation of 30S ribosomal subunits. This Methylobacterium nodulans (strain LMG 21967 / CNCM I-2342 / ORS 2060) protein is Ribosome maturation factor RimP.